The sequence spans 406 residues: Renin (406 aa).

The first 23 residues, 1 to 23 (MDGWRRMPRWGLLLLLWGSCTFG), serve as a signal peptide directing secretion. Positions 24–66 (LPTDTTTFKRIFLKRMPSIRESLKERGVDMARLGPEWSQPMKR) are cleaved as a propeptide — activation peptide. An N-linked (GlcNAc...) asparagine glycan is attached at Asn71. The Peptidase A1 domain maps to 86 to 403 (YYGEIGIGTP…DRRNNRIGFA (318 aa)). Residue Asp104 is part of the active site. A disulfide bridge connects residues Cys117 and Cys124. A glycan (N-linked (GlcNAc...) asparagine) is linked at Asn141. A disulfide bridge connects residues Cys283 and Cys287. Asp292 is a catalytic residue. Cys325 and Cys362 are joined by a disulfide.

Belongs to the peptidase A1 family. In terms of assembly, interacts with ATP6AP2.

It localises to the secreted. It is found in the membrane. It carries out the reaction Cleavage of Leu-|-Xaa bond in angiotensinogen to generate angiotensin I.. Its activity is regulated as follows. Interaction with ATP6AP2 results in a 5-fold increased efficiency in angiotensinogen processing. Its function is as follows. Renin is a highly specific endopeptidase, whose only known function is to generate angiotensin I from angiotensinogen in the plasma, initiating a cascade of reactions that produce an elevation of blood pressure and increased sodium retention by the kidney. The chain is Renin (REN) from Homo sapiens (Human).